The sequence spans 82 residues: Penaeidin-3a (82 aa).

An N-terminal signal peptide occupies residues 1-19; that stretch reads MRLVVCLVFLASFALVCQG. Position 20 is a pyrrolidone carboxylic acid (Gln20). 3 disulfide bridges follow: Cys51/Cys66, Cys55/Cys73, and Cys67/Cys74. Position 81 is a serine amide (Ser81).

In terms of processing, the N-terminus forms pyrrolidone carboxylic acid. Higher expression in hemocytes and to a lesser extent in heart, testis, gills, intestine, lymphoid organ and hepatopancreas. Traces in eyes and subcuticular epithelium. Not present in the brain.

Its subcellular location is the cytoplasmic granule. Functionally, antibacterial activity against M.luteus and E.coli bacteria. Antifungal activity against N.crassa and F.oxysporum. Presents chitin-binding activity. The chain is Penaeidin-3a from Penaeus vannamei (Whiteleg shrimp).